A 383-amino-acid chain; its full sequence is MSWQDKIAQGLQRRRDAAAYRTRQVNEGANGRWLQSGERQYLNFSSNDYLGLSQNDEVIAAWQQGARRYGVGSGGSGHVTGYSQPHARLEQRLADWLGYPRALLFISGYAANQAVLTALTDADDRILADKLSHASLLEAAAHSPAQLRRFQHNQPEALQNLLIKPCQGQTLVVTEGVFSMDGDSAPLAALQQQTSAAGGWLLVDDAHGIGVHGEEGRGSCWLQGVQPELLVVTFGKAFGLSGAAVLCQEPVAEYLLQYARHLIYSTAMPPAQACALQAALRQVQQGDALRQQLQQRIRQFRTAAAHLPLQLGASKTAIQPLLVGDNQQSLIWAEQLRAAGLWVTAIRPPTVPPGSARLRITLSAAHQPEDIDRLLEVLYGLCH.

Substrate is bound at residue R21. 108 to 109 (GY) is a binding site for pyridoxal 5'-phosphate. Residue H133 participates in substrate binding. Pyridoxal 5'-phosphate contacts are provided by S179, H207, and T233. K236 bears the N6-(pyridoxal phosphate)lysine mark. T350 lines the substrate pocket.

This sequence belongs to the class-II pyridoxal-phosphate-dependent aminotransferase family. BioF subfamily. As to quaternary structure, homodimer. The cofactor is pyridoxal 5'-phosphate.

The catalysed reaction is 6-carboxyhexanoyl-[ACP] + L-alanine + H(+) = (8S)-8-amino-7-oxononanoate + holo-[ACP] + CO2. It participates in cofactor biosynthesis; biotin biosynthesis. In terms of biological role, catalyzes the decarboxylative condensation of pimeloyl-[acyl-carrier protein] and L-alanine to produce 8-amino-7-oxononanoate (AON), [acyl-carrier protein], and carbon dioxide. This chain is 8-amino-7-oxononanoate synthase, found in Yersinia pseudotuberculosis serotype O:1b (strain IP 31758).